Consider the following 311-residue polypeptide: Homeobox-leucine zipper protein HOX1 (311 aa).

2 disordered regions span residues 29 to 69 (AGGA…SDHR) and 97 to 160 (AETT…KKLR). The span at 119–145 (SSPNSTLSSLSGKRGAPSAATAAAAAA) shows a compositional bias: low complexity. A DNA-binding region (homeobox) is located at residues 154–213 (GSRKKLRLSKDQAAVLEDTFKEHNTLNPKQKAALARQLNLKPRQVEVWFQNRRARTKLKQ). The tract at residues 212-256 (KQTEVDCELLKRCCETLTDENRRLHRELQELRALKLATAAAAPHH) is leucine-zipper. The segment at 279 to 311 (SAATTTRNNSGAAPARPVPTRPWPPAAAQRSSA) is disordered. The segment covering 280 to 289 (AATTTRNNSG) has biased composition (polar residues). Pro residues predominate over residues 294-303 (RPVPTRPWPP).

It belongs to the HD-ZIP homeobox family. Class II subfamily. Homodimer. May form a heterodimer with HOX2, HOX3 or HOX7. In terms of tissue distribution, expressed in root provascular and vascular cylinder, provascular and vascular strands of leaves, provascular and vascular strands of the whole panicle, in mature embryo provascular bundles of scutellum and embryonic axis and provascular and vascular strands of young immature spikelet organs. Expressed in differentiating and differentiated xylem and phloem elements, and in outer and inner bundle sheath cells of all vascular bundles. Expressed in auricles, ligules, culm, guard cells brac hairs and pollen.

It localises to the nucleus. Its function is as follows. Probable transcription repressor involved leaf development. Binds to the DNA sequence 5'-CAAT[GC]ATTG-3'. May act as a regulatory switch to specify provascular cell fate. The polypeptide is Homeobox-leucine zipper protein HOX1 (HOX1) (Oryza sativa subsp. japonica (Rice)).